We begin with the raw amino-acid sequence, 88 residues long: Large ribosomal subunit protein bL27 (88 aa).

Residues 1 to 23 form a disordered region; it reads MAHKKAGGSSRNGRDSAGRRLGV.

The protein belongs to the bacterial ribosomal protein bL27 family.

This is Large ribosomal subunit protein bL27 from Methylorubrum extorquens (strain CM4 / NCIMB 13688) (Methylobacterium extorquens).